A 139-amino-acid chain; its full sequence is Large ribosomal subunit protein mL42 (139 aa).

The N-terminal 32 residues, 1–32, are a transit peptide targeting the mitochondrion; that stretch reads MAVAAVKWVMSKRTILKHLFPVQNGALYCVCH.

This sequence belongs to the mitochondrion-specific ribosomal protein mL42 family. As to quaternary structure, component of the mitochondrial ribosome large subunit (39S) which comprises a 16S rRNA and about 50 distinct proteins. Component of the mitochondrial ribosome small subunit (28S) which comprises a 12S rRNA and about 30 distinct proteins.

It is found in the mitochondrion. The protein is Large ribosomal subunit protein mL42 (MRPL42) of Pongo abelii (Sumatran orangutan).